A 277-amino-acid chain; its full sequence is Intercellular adhesion molecule 2 (277 aa).

Positions 1-22 (MSSFACWSLSLLILFYSPGSGE) are cleaved as a signal peptide. Residues 23–222 (KAFEVYIWSE…EVYEPMQDNQ (200 aa)) are Extracellular-facing. Ig-like C2-type domains follow at residues 39 to 98 (TESW…CSGK) and 127 to 196 (GEDF…LDLR). N45, N82, N158, N176, and N186 each carry an N-linked (GlcNAc...) asparagine glycan. 3 disulfides stabilise this stretch: C46-C91, C50-C95, and C134-C189. A helical transmembrane segment spans residues 223-247 (MVIIIVVVSILLFLFVTSVLLCFIF). The Cytoplasmic portion of the chain corresponds to 248-277 (GQHWHRRRTGTYGVLAAWRRLPRAFRARPV). The segment at 250 to 277 (HWHRRRTGTYGVLAAWRRLPRAFRARPV) is required for interaction with EZR, MSN and RDX and co-localization to microvilli.

This sequence belongs to the immunoglobulin superfamily. ICAM family. Interacts with RDX, EZR and MSN. As to expression, expressed in endothelial cells and leukocytes. High levels found in lung.

The protein localises to the membrane. Its subcellular location is the cell projection. The protein resides in the microvillus. Functionally, ICAM proteins are ligands for the leukocyte adhesion protein LFA-1 (integrin alpha-L/beta-2). ICAM2 may play a role in lymphocyte recirculation by blocking LFA-1-dependent cell adhesion. It mediates adhesive interactions important for antigen-specific immune response, NK-cell mediated clearance, lymphocyte recirculation, and other cellular interactions important for immune response and surveillance. The protein is Intercellular adhesion molecule 2 (Icam2) of Mus musculus (Mouse).